Consider the following 377-residue polypeptide: Glutamate 5-kinase (377 aa).

K20 serves as a coordination point for ATP. Substrate-binding residues include S60, D147, and N159. 179-180 (TD) is a binding site for ATP. One can recognise a PUA domain in the interval 285 to 363 (AGRLVIDAGA…DKVHQVLGEA (79 aa)).

This sequence belongs to the glutamate 5-kinase family.

It is found in the cytoplasm. It carries out the reaction L-glutamate + ATP = L-glutamyl 5-phosphate + ADP. It functions in the pathway amino-acid biosynthesis; L-proline biosynthesis; L-glutamate 5-semialdehyde from L-glutamate: step 1/2. Functionally, catalyzes the transfer of a phosphate group to glutamate to form L-glutamate 5-phosphate. The sequence is that of Glutamate 5-kinase from Acinetobacter baylyi (strain ATCC 33305 / BD413 / ADP1).